The following is a 122-amino-acid chain: Large ribosomal subunit protein uL18 (122 aa).

The interval methionine 1–arginine 27 is disordered. The span at glutamine 9 to arginine 27 shows a compositional bias: basic residues.

This sequence belongs to the universal ribosomal protein uL18 family. In terms of assembly, part of the 50S ribosomal subunit; part of the 5S rRNA/L5/L18/L25 subcomplex. Contacts the 5S and 23S rRNAs.

Its function is as follows. This is one of the proteins that bind and probably mediate the attachment of the 5S RNA into the large ribosomal subunit, where it forms part of the central protuberance. This chain is Large ribosomal subunit protein uL18, found in Prochlorococcus marinus (strain MIT 9211).